Consider the following 24-residue polypeptide: Ranatuerin-4 (24 aa).

C18 and C24 are joined by a disulfide.

The protein belongs to the frog skin active peptide (FSAP) family. Ranatuerin subfamily. Expressed by the skin glands.

It is found in the secreted. Antibacterial activity against Gram-positive bacterium S.aureus (MIC=55 uM). Shows no detectable hemolytic activity towards human erythrocytes. The sequence is that of Ranatuerin-4 from Aquarana catesbeiana (American bullfrog).